The chain runs to 527 residues: Exodeoxyribonuclease 7 large subunit (527 aa).

The disordered stretch occupies residues 499–527; that stretch reads AGEEGAPPPAAPKKRASRPVVPTKQGSLF.

This sequence belongs to the XseA family. As to quaternary structure, heterooligomer composed of large and small subunits.

Its subcellular location is the cytoplasm. It carries out the reaction Exonucleolytic cleavage in either 5'- to 3'- or 3'- to 5'-direction to yield nucleoside 5'-phosphates.. Its function is as follows. Bidirectionally degrades single-stranded DNA into large acid-insoluble oligonucleotides, which are then degraded further into small acid-soluble oligonucleotides. The sequence is that of Exodeoxyribonuclease 7 large subunit from Sinorhizobium fredii (strain NBRC 101917 / NGR234).